A 257-amino-acid chain; its full sequence is Isoprenyl transferase 1 (257 aa).

The active site involves Asp37. Asp37 contacts Mg(2+). Substrate contacts are provided by residues Gly38–Arg41, Trp42, His54, and Ser82–Asp84. Asn85 functions as the Proton acceptor in the catalytic mechanism. Residues Phe86, Arg88, Arg206, and Arg212 to Ser214 contribute to the substrate site. Glu225 is a Mg(2+) binding site.

This sequence belongs to the UPP synthase family. As to quaternary structure, homodimer. The cofactor is Mg(2+).

In terms of biological role, catalyzes the condensation of isopentenyl diphosphate (IPP) with allylic pyrophosphates generating different type of terpenoids. This chain is Isoprenyl transferase 1, found in Streptomyces avermitilis (strain ATCC 31267 / DSM 46492 / JCM 5070 / NBRC 14893 / NCIMB 12804 / NRRL 8165 / MA-4680).